The sequence spans 345 residues: Selenide, water dikinase (345 aa).

The active site involves cysteine 16. Residues lysine 19 and threonine 46 to aspartate 48 each bind ATP. Aspartate 49 lines the Mg(2+) pocket. Residues aspartate 66, aspartate 89, and glycine 136–threonine 138 contribute to the ATP site. A Mg(2+)-binding site is contributed by aspartate 89. Aspartate 224 is a binding site for Mg(2+).

It belongs to the selenophosphate synthase 1 family. Class I subfamily. As to quaternary structure, homodimer. It depends on Mg(2+) as a cofactor.

The catalysed reaction is hydrogenselenide + ATP + H2O = selenophosphate + AMP + phosphate + 2 H(+). Functionally, synthesizes selenophosphate from selenide and ATP. This Clostridium botulinum (strain Eklund 17B / Type B) protein is Selenide, water dikinase.